The sequence spans 462 residues: tRNA wybutosine-synthesizing protein 2 (462 aa).

Residues Ser257, Lys264, and 305–306 (EL) contribute to the S-adenosyl-L-methionine site.

The protein belongs to the class I-like SAM-binding methyltransferase superfamily. TRM5/TYW2 family.

The protein resides in the cytoplasm. It carries out the reaction 4-demethylwyosine(37) in tRNA(Phe) + S-adenosyl-L-methionine = 4-demethyl-7-[(3S)-3-amino-3-carboxypropyl]wyosine(37) in tRNA(Phe) + S-methyl-5'-thioadenosine + H(+). It functions in the pathway tRNA modification; wybutosine-tRNA(Phe) biosynthesis. Its function is as follows. S-adenosyl-L-methionine-dependent transferase that acts as a component of the wybutosine biosynthesis pathway. Wybutosine is a hyper modified guanosine with a tricyclic base found at the 3'-position adjacent to the anticodon of eukaryotic phenylalanine tRNA. Catalyzes the transfer of the alpha-amino-alpha-carboxypropyl (acp) group from S-adenosyl-L-methionine to the C-7 position of 4-demethylwyosine (imG-14) to produce wybutosine-86. This is tRNA wybutosine-synthesizing protein 2 (TRM12) from Saccharomyces cerevisiae (strain ATCC 204508 / S288c) (Baker's yeast).